The chain runs to 230 residues: Cytidylate kinase (230 aa).

12 to 20 (GPSGTGKST) is a binding site for ATP.

It belongs to the cytidylate kinase family. Type 1 subfamily.

Its subcellular location is the cytoplasm. It carries out the reaction CMP + ATP = CDP + ADP. The catalysed reaction is dCMP + ATP = dCDP + ADP. The protein is Cytidylate kinase of Corynebacterium efficiens (strain DSM 44549 / YS-314 / AJ 12310 / JCM 11189 / NBRC 100395).